We begin with the raw amino-acid sequence, 252 residues long: Phosphoglycolate phosphatase (252 aa).

D13 functions as the Nucleophile in the catalytic mechanism. Positions 13, 15, and 192 each coordinate Mg(2+).

The protein belongs to the HAD-like hydrolase superfamily. CbbY/CbbZ/Gph/YieH family. Monomer. Requires Mg(2+) as cofactor. Chloride is required as a cofactor.

It carries out the reaction 2-phosphoglycolate + H2O = glycolate + phosphate. The protein operates within organic acid metabolism; glycolate biosynthesis; glycolate from 2-phosphoglycolate: step 1/1. Specifically catalyzes the dephosphorylation of 2-phosphoglycolate. Is involved in the dissimilation of the intracellular 2-phosphoglycolate formed during the DNA repair of 3'-phosphoglycolate ends, a major class of DNA lesions induced by oxidative stress. The protein is Phosphoglycolate phosphatase of Salmonella typhi.